The sequence spans 357 residues: Ribosomal RNA large subunit methyltransferase M (357 aa).

Residues serine 183, 216 to 219 (APGG), aspartate 235, aspartate 255, and aspartate 271 contribute to the S-adenosyl-L-methionine site. Lysine 300 functions as the Proton acceptor in the catalytic mechanism.

It belongs to the class I-like SAM-binding methyltransferase superfamily. RNA methyltransferase RlmE family. RlmM subfamily. Monomer.

It is found in the cytoplasm. The catalysed reaction is cytidine(2498) in 23S rRNA + S-adenosyl-L-methionine = 2'-O-methylcytidine(2498) in 23S rRNA + S-adenosyl-L-homocysteine + H(+). Its function is as follows. Catalyzes the 2'-O-methylation at nucleotide C2498 in 23S rRNA. The protein is Ribosomal RNA large subunit methyltransferase M of Pseudomonas syringae pv. tomato (strain ATCC BAA-871 / DC3000).